The primary structure comprises 3133 residues: Probable polyketide synthase 38 (3133 aa).

The 432-residue stretch at 9 to 440 (DDDVAVIGIG…GSNVCLILSE (432 aa)) folds into the Ketosynthase family 3 (KS3) domain. Catalysis depends on for beta-ketoacyl synthase activity residues C181, H320, and H363. An acyl/malonyl transferase region spans residues 647–680 (GVSADIIIGHSLGEISSAYCSGMIDFQTLCYLTY). The active-site For acyl/malonyl transferase activity is S657. The segment at 945 to 1067 (GPSIHSLGNN…GNFSLSKHNI (123 aa)) is N-terminal hotdog fold. A PKS/mFAS DH domain is found at 945–1248 (GPSIHSLGNN…CTIVASNPDS (304 aa)). H979 acts as the Proton acceptor; for dehydratase activity in catalysis. The tract at residues 1083–1248 (NFTCISKQDL…CTIVASNPDS (166 aa)) is C-terminal hotdog fold. Residue D1155 is the Proton donor; for dehydratase activity of the active site. Positions 1370–1408 (NNNNNNNNNNNNNNNNNNNNNNNNNNNNNNNNNDNDNDN) are disordered. One can recognise a Carrier domain in the interval 2562 to 2639 (NNNEIIRSTI…QSIEIIKSAH (78 aa)). At S2599 the chain carries O-(pantetheine 4'-phosphoryl)serine. Positions 2649 to 2711 (NNNNSNHHDN…NNNNNNNNNN (63 aa)) form a coiled coil. Disordered regions lie at residues 2691–2715 (LNNN…NNNN) and 2794–2817 (GNIS…NNNQ). Low complexity-rich tracts occupy residues 2692-2715 (NNNN…NNNN) and 2795-2817 (NISN…NNNQ).

Pantetheine 4'-phosphate serves as cofactor.

Probable polyketide synthase. The polypeptide is Probable polyketide synthase 38 (pks38) (Dictyostelium discoideum (Social amoeba)).